The sequence spans 470 residues: Pyruvate kinase I (470 aa).

A substrate-binding site is contributed by R32. K(+) is bound by residues N34, S36, D66, and T67. 34 to 37 (NFSH) is an ATP binding site. Residues R73 and K156 each contribute to the ATP site. Mg(2+) is bound at residue E222. Substrate contacts are provided by G245, D246, and T278. Residue D246 coordinates Mg(2+).

This sequence belongs to the pyruvate kinase family. In terms of assembly, homotetramer. Mg(2+) is required as a cofactor. K(+) serves as cofactor.

It carries out the reaction pyruvate + ATP = phosphoenolpyruvate + ADP + H(+). Its pathway is carbohydrate degradation; glycolysis; pyruvate from D-glyceraldehyde 3-phosphate: step 5/5. In Salmonella typhi, this protein is Pyruvate kinase I (pykF).